A 130-amino-acid polypeptide reads, in one-letter code: Glycine cleavage system H protein (130 aa).

The region spanning 24–106 (EYTVGITEHA…YHEGWLFRIK (83 aa)) is the Lipoyl-binding domain. Residue K65 is modified to N6-lipoyllysine.

The protein belongs to the GcvH family. As to quaternary structure, the glycine cleavage system is composed of four proteins: P, T, L and H. The cofactor is (R)-lipoate.

Its function is as follows. The glycine cleavage system catalyzes the degradation of glycine. The H protein shuttles the methylamine group of glycine from the P protein to the T protein. The protein is Glycine cleavage system H protein of Photorhabdus laumondii subsp. laumondii (strain DSM 15139 / CIP 105565 / TT01) (Photorhabdus luminescens subsp. laumondii).